The sequence spans 110 residues: UPF0122 protein RBAM_015800 (110 aa).

It belongs to the UPF0122 family.

Might take part in the signal recognition particle (SRP) pathway. This is inferred from the conservation of its genetic proximity to ftsY/ffh. May be a regulatory protein. The chain is UPF0122 protein RBAM_015800 from Bacillus velezensis (strain DSM 23117 / BGSC 10A6 / LMG 26770 / FZB42) (Bacillus amyloliquefaciens subsp. plantarum).